Reading from the N-terminus, the 282-residue chain is 4-diphosphocytidyl-2-C-methyl-D-erythritol kinase (282 aa).

Lysine 11 is an active-site residue. Position 93 to 103 (93 to 103 (LVSAGLAGGSA)) interacts with ATP. Aspartate 133 is a catalytic residue.

This sequence belongs to the GHMP kinase family. IspE subfamily.

It catalyses the reaction 4-CDP-2-C-methyl-D-erythritol + ATP = 4-CDP-2-C-methyl-D-erythritol 2-phosphate + ADP + H(+). It functions in the pathway isoprenoid biosynthesis; isopentenyl diphosphate biosynthesis via DXP pathway; isopentenyl diphosphate from 1-deoxy-D-xylulose 5-phosphate: step 3/6. Its function is as follows. Catalyzes the phosphorylation of the position 2 hydroxy group of 4-diphosphocytidyl-2C-methyl-D-erythritol. This is 4-diphosphocytidyl-2-C-methyl-D-erythritol kinase from Ehrlichia chaffeensis (strain ATCC CRL-10679 / Arkansas).